The following is a 402-amino-acid chain: MKETGIELMKNTKSVRDIDVKDKRVLIRVDFNVPMDEDFDISDDTRIREALPTINYCIDNHAQNIVLVSHLGRPKGRNAEFSLKHVLKRVERLLGRDIAFAETIENVENLQQQSKSGSVILLENIRFYEGEEKNDEELSTKLASICDVYINDAFGTSHRAHSSTCGIAKYAKECVAGLLLKKEIDSFAKAMANPLKPVLLIVGGSKVSSKLALLYNILDVVDKIIIGGAMSNTFLKARGFDMQKSLVEDDLVSEARKILDKAKEKKVKIYLPVDVVSTDDIKEHRHIKITPAQDIPEGFMAVDMGPATSKLFSEVVRDSQTIIWNGPLGIYEIQAFSRGTFNLAHAVSDTYAFSLIGGGDTADAIDKAGERDNMSFISTGGGASLELLEGKILPAFEVLERK.

Residues 30–32 (DFN), arginine 46, 70–73 (HLGR), arginine 126, and arginine 159 contribute to the substrate site. Residues lysine 210, glutamate 332, and 358-361 (GGDT) contribute to the ATP site.

Belongs to the phosphoglycerate kinase family. Monomer.

It localises to the cytoplasm. It catalyses the reaction (2R)-3-phosphoglycerate + ATP = (2R)-3-phospho-glyceroyl phosphate + ADP. It participates in carbohydrate degradation; glycolysis; pyruvate from D-glyceraldehyde 3-phosphate: step 2/5. The protein is Phosphoglycerate kinase of Helicobacter hepaticus (strain ATCC 51449 / 3B1).